Reading from the N-terminus, the 246-residue chain is 1-(5-phosphoribosyl)-5-[(5-phosphoribosylamino)methylideneamino] imidazole-4-carboxamide isomerase (246 aa).

D8 (proton acceptor) is an active-site residue. Catalysis depends on D129, which acts as the Proton donor.

It belongs to the HisA/HisF family.

The protein resides in the cytoplasm. The catalysed reaction is 1-(5-phospho-beta-D-ribosyl)-5-[(5-phospho-beta-D-ribosylamino)methylideneamino]imidazole-4-carboxamide = 5-[(5-phospho-1-deoxy-D-ribulos-1-ylimino)methylamino]-1-(5-phospho-beta-D-ribosyl)imidazole-4-carboxamide. Its pathway is amino-acid biosynthesis; L-histidine biosynthesis; L-histidine from 5-phospho-alpha-D-ribose 1-diphosphate: step 4/9. This is 1-(5-phosphoribosyl)-5-[(5-phosphoribosylamino)methylideneamino] imidazole-4-carboxamide isomerase from Methylocella silvestris (strain DSM 15510 / CIP 108128 / LMG 27833 / NCIMB 13906 / BL2).